Here is an 86-residue protein sequence, read N- to C-terminus: UPF0297 protein SH1302 (86 aa).

It belongs to the UPF0297 family.

This chain is UPF0297 protein SH1302, found in Staphylococcus haemolyticus (strain JCSC1435).